Consider the following 182-residue polypeptide: Crossover junction endodeoxyribonuclease RuvC (182 aa).

Catalysis depends on residues D7, E69, and D141. D7, E69, and D141 together coordinate Mg(2+).

The protein belongs to the RuvC family. As to quaternary structure, homodimer which binds Holliday junction (HJ) DNA. The HJ becomes 2-fold symmetrical on binding to RuvC with unstacked arms; it has a different conformation from HJ DNA in complex with RuvA. In the full resolvosome a probable DNA-RuvA(4)-RuvB(12)-RuvC(2) complex forms which resolves the HJ. The cofactor is Mg(2+).

It is found in the cytoplasm. It carries out the reaction Endonucleolytic cleavage at a junction such as a reciprocal single-stranded crossover between two homologous DNA duplexes (Holliday junction).. In terms of biological role, the RuvA-RuvB-RuvC complex processes Holliday junction (HJ) DNA during genetic recombination and DNA repair. Endonuclease that resolves HJ intermediates. Cleaves cruciform DNA by making single-stranded nicks across the HJ at symmetrical positions within the homologous arms, yielding a 5'-phosphate and a 3'-hydroxyl group; requires a central core of homology in the junction. The consensus cleavage sequence is 5'-(A/T)TT(C/G)-3'. Cleavage occurs on the 3'-side of the TT dinucleotide at the point of strand exchange. HJ branch migration catalyzed by RuvA-RuvB allows RuvC to scan DNA until it finds its consensus sequence, where it cleaves and resolves the cruciform DNA. The sequence is that of Crossover junction endodeoxyribonuclease RuvC from Paracidovorax citrulli (strain AAC00-1) (Acidovorax citrulli).